Here is a 129-residue protein sequence, read N- to C-terminus: Prefoldin subunit 6 (129 aa).

An N-acetylalanine modification is found at Ala2. Lys21 is modified (N6-acetyllysine). Lys66 bears the N6-acetyllysine; alternate mark. Lys66 is covalently cross-linked (Glycyl lysine isopeptide (Lys-Gly) (interchain with G-Cter in SUMO1); alternate). Lys66 participates in a covalent cross-link: Glycyl lysine isopeptide (Lys-Gly) (interchain with G-Cter in SUMO2); alternate.

The protein belongs to the prefoldin subunit beta family. As to quaternary structure, heterohexamer of two PFD-alpha type and four PFD-beta type subunits. Component of the PAQosome complex which is responsible for the biogenesis of several protein complexes and which consists of R2TP complex members RUVBL1, RUVBL2, RPAP3 and PIH1D1, URI complex members PFDN2, PFDN6, PDRG1, UXT and URI1 as well as ASDURF, POLR2E and DNAAF10/WDR92.

Binds specifically to cytosolic chaperonin (c-CPN) and transfers target proteins to it. Binds to nascent polypeptide chain and promotes folding in an environment in which there are many competing pathways for nonnative proteins. This Bos taurus (Bovine) protein is Prefoldin subunit 6 (PFDN6).